A 452-amino-acid polypeptide reads, in one-letter code: Elongation factor Tu, mitochondrial (452 aa).

The N-terminal 43 residues, 1 to 43, are a transit peptide targeting the mitochondrion; the sequence is MAAATLLRATPLFSGLGAGPAPLLQGLLRPLKAQALPVLCRGL. Residues 55–251 form the tr-type G domain; it reads KPHVNVGTIG…AVDTYIPVPT (197 aa). The segment at 64 to 71 is G1; it reads GHVDHGKT. Positions 67, 69, 70, 71, and 72 each coordinate GTP. T71 contacts Mg(2+). An N6-acetyllysine modification is found at K79. At K88 the chain carries N6-acetyllysine; alternate. Residue K88 is modified to N6-succinyllysine; alternate. The G2 stretch occupies residues 105 to 109; that stretch reads GITIN. The tract at residues 126 to 129 is G3; it reads DCPG. GTP is bound by residues N181, D184, S219, A220, and L221. Residues 181–184 are G4; the sequence is NKAD. Residues 219–221 form a G5 region; sequence SAL. K234 carries the N6-succinyllysine modification. The residue at position 256 (K256) is an N6-acetyllysine. T278 is subject to Phosphothreonine. At K286 the chain carries N6-succinyllysine. S312 is modified (phosphoserine). K361 and K418 each carry N6-acetyllysine.

Belongs to the TRAFAC class translation factor GTPase superfamily. Classic translation factor GTPase family. EF-Tu/EF-1A subfamily. Interacts with NLRX1. Interacts with ATG16L1.

It localises to the mitochondrion. It carries out the reaction GTP + H2O = GDP + phosphate + H(+). Its function is as follows. GTP hydrolase that promotes the GTP-dependent binding of aminoacyl-tRNA to the A-site of ribosomes during protein biosynthesis. Also plays a role in the regulation of autophagy and innate immunity. Recruits ATG5-ATG12 and NLRX1 at mitochondria and serves as a checkpoint of the RIGI-MAVS pathway. In turn, inhibits RLR-mediated type I interferon while promoting autophagy. In Bos taurus (Bovine), this protein is Elongation factor Tu, mitochondrial (TUFM).